The chain runs to 903 residues: Alanine--tRNA ligase (903 aa).

4 residues coordinate Zn(2+): histidine 581, histidine 585, cysteine 693, and histidine 697.

Belongs to the class-II aminoacyl-tRNA synthetase family. The cofactor is Zn(2+).

It localises to the cytoplasm. It catalyses the reaction tRNA(Ala) + L-alanine + ATP = L-alanyl-tRNA(Ala) + AMP + diphosphate. Functionally, catalyzes the attachment of alanine to tRNA(Ala) in a two-step reaction: alanine is first activated by ATP to form Ala-AMP and then transferred to the acceptor end of tRNA(Ala). Also edits incorrectly charged Ser-tRNA(Ala) and Gly-tRNA(Ala) via its editing domain. This Psychrobacter sp. (strain PRwf-1) protein is Alanine--tRNA ligase.